A 245-amino-acid polypeptide reads, in one-letter code: Demethylmenaquinone methyltransferase (245 aa).

S-adenosyl-L-methionine is bound by residues T62, D80, 105 to 106 (DA), and S122.

It belongs to the class I-like SAM-binding methyltransferase superfamily. MenG/UbiE family.

The catalysed reaction is a 2-demethylmenaquinol + S-adenosyl-L-methionine = a menaquinol + S-adenosyl-L-homocysteine + H(+). Its pathway is quinol/quinone metabolism; menaquinone biosynthesis; menaquinol from 1,4-dihydroxy-2-naphthoate: step 2/2. Its function is as follows. Methyltransferase required for the conversion of demethylmenaquinol (DMKH2) to menaquinol (MKH2). The chain is Demethylmenaquinone methyltransferase from Clavibacter sepedonicus (Clavibacter michiganensis subsp. sepedonicus).